A 288-amino-acid chain; its full sequence is N-glycosylase/DNA lyase (288 aa).

Residues Gln35, Ser62, and Trp73 each coordinate 8-oxoguanine. The interval 134 to 203 is helix-hairpin-helix; the sequence is NPLVLVERPS…VACASISSEM (70 aa). Lys160 serves as the catalytic Schiff-base intermediate with DNA. Positions 164 and 189 each coordinate 8-oxoguanine. Asp191 is a catalytic residue. 8-oxoguanine-binding residues include Asp238 and Trp242.

The protein belongs to the archaeal N-glycosylase/DNA lyase (AGOG) family.

The enzyme catalyses 2'-deoxyribonucleotide-(2'-deoxyribose 5'-phosphate)-2'-deoxyribonucleotide-DNA = a 3'-end 2'-deoxyribonucleotide-(2,3-dehydro-2,3-deoxyribose 5'-phosphate)-DNA + a 5'-end 5'-phospho-2'-deoxyribonucleoside-DNA + H(+). In terms of biological role, DNA repair enzyme that is part of the base excision repair (BER) pathway; protects from oxidative damage by removing the major product of DNA oxidation, 8-oxoguanine (GO), from single- and double-stranded DNA substrates. The sequence is that of N-glycosylase/DNA lyase from Aeropyrum pernix (strain ATCC 700893 / DSM 11879 / JCM 9820 / NBRC 100138 / K1).